The primary structure comprises 264 residues: Virulence plasmid ParA family protein pGP5-D (264 aa).

9–16 (FKGGTGKT) lines the ATP pocket.

This sequence belongs to the ParA family.

Functionally, required for growth within mammalian cells. This is Virulence plasmid ParA family protein pGP5-D from Chlamydia trachomatis.